The chain runs to 1020 residues: Phosphatidylinositol 3-kinase VPS34 (1020 aa).

The C2 PI3K-type domain maps to 49-210 (LSTKFEDPTV…NWLDKMVLPK (162 aa)). A PIK helical domain is found at 331-577 (DKELKPTPQL…DGPIKIYMDI (247 aa)). The PI3K/PI4K catalytic domain occupies 666–1004 (YPEESSVFKS…LINDSVNAFL (339 aa)). A G-loop region spans residues 672–678 (VFKSSLA). The catalytic loop stretch occupies residues 873-881 (GVGDRHLDN). The tract at residues 892–913 (HADFGYILGRDPKPFPPLMKLP) is activation loop.

Belongs to the PI3/PI4-kinase family. As to quaternary structure, component of the autophagy-specific VPS34 PI3-kinase complex I composed of at least VPS15, VPS30, VPS34, and of the VPS34 PI3-kinase complex II composed of VPS15, VPS30, VPS34 and VPS38. Interacts with VMNA7. In terms of processing, autophosphorylated.

It is found in the golgi apparatus. It localises to the trans-Golgi network membrane. The protein localises to the endosome membrane. The enzyme catalyses a 1,2-diacyl-sn-glycero-3-phospho-(1D-myo-inositol) + ATP = a 1,2-diacyl-sn-glycero-3-phospho-(1D-myo-inositol-3-phosphate) + ADP + H(+). Functionally, multifunctional phosphatidylinositol 3-kinase involved in acidification of vacuoles, pH-dependent cell growth, and autophagocytosis. Plays an important role in protein transport and virulence. Component of the autophagy-specific VPS34 PI3-kinase complex I essential to recruit the ATG8-phosphatidylinositol conjugate and the ATG12-ATG5 conjugate to the pre-autophagosomal structure. Also involved in endosome-to-Golgi retrograde transport as part of the VPS34 PI3-kinase complex II. This second complex is required for the endosome-to-Golgi retrieval of PEP1 and KEX2, and the recruitment of VPS5 and VPS7, two components of the retromer complex, to endosomal membranes (probably through the synthesis of a specific pool of phosphatidylinositol 3-phosphate recruiting the retromer to the endosomes). Finally, it might also be involved in ethanol tolerance and cell wall integrity. The polypeptide is Phosphatidylinositol 3-kinase VPS34 (Candida albicans (Yeast)).